A 606-amino-acid chain; its full sequence is Endo-beta-1,4-xylanase Xyn10C (606 aa).

Positions Met-1–Ala-19 are cleaved as a signal peptide. Cys-20 is lipidated: N-palmitoyl cysteine. A lipid anchor (S-diacylglycerol cysteine) is attached at Cys-20. The tract at residues Gly-23 to Ser-64 is disordered. Residues Thr-29–Ser-64 are compositionally biased toward low complexity. The CBM15 domain maps to Gly-91–Glu-242. Residues Asn-106 and Gln-171 each coordinate a carbohydrate. A disulfide bridge connects residues Cys-183 and Cys-200. Gln-217 contributes to the a carbohydrate binding site. One can recognise a GH10 domain in the interval Ser-245 to Ala-596. Residues Asn-296–Lys-299, His-332, and Asn-384 each bind substrate. Catalysis depends on Glu-385, which acts as the Proton donor. The active-site Nucleophile is Glu-497. Trp-552 provides a ligand contact to substrate.

The protein belongs to the glycosyl hydrolase 10 (cellulase F) family.

The protein localises to the cell outer membrane. The enzyme catalyses Endohydrolysis of (1-&gt;4)-beta-D-xylosidic linkages in xylans.. The protein operates within glycan degradation; xylan degradation. Endo-acting xylanase which specifically cleaves internal linkages on the xylan backbone, releasing xylooligosaccharides. Is able to hydrolyze oat spelt xylan, the arabinoxylans from wheat and rye, and glucuronoxylan. Also displays very low activity against xylooligosaccharides. During the xylan degradation process, Xyn10C may act on the soluble xylans and long xylooligosaccharides products released by the secreted xylanases Xyn11A, Xyn11B and Xyn10A. In Cellvibrio japonicus (Pseudomonas fluorescens subsp. cellulosa), this protein is Endo-beta-1,4-xylanase Xyn10C (xyn10C).